Here is a 240-residue protein sequence, read N- to C-terminus: Probable transcriptional regulatory protein MS53_0373 (240 aa).

This sequence belongs to the TACO1 family.

Its subcellular location is the cytoplasm. This Mycoplasmopsis synoviae (strain 53) (Mycoplasma synoviae) protein is Probable transcriptional regulatory protein MS53_0373.